Consider the following 661-residue polypeptide: DNA ligase (661 aa).

Residues 31 to 35, 80 to 81, and E109 contribute to the NAD(+) site; these read DSGYD and SL. K111 (N6-AMP-lysine intermediate) is an active-site residue. 4 residues coordinate NAD(+): R132, E167, K283, and K307. 4 residues coordinate Zn(2+): C401, C404, C419, and C424. Residues 582–661 form the BRCT domain; it reads AGEQLLQGKT…AGFLNLLGLS (80 aa).

Belongs to the NAD-dependent DNA ligase family. LigA subfamily. Mg(2+) serves as cofactor. The cofactor is Mn(2+).

It carries out the reaction NAD(+) + (deoxyribonucleotide)n-3'-hydroxyl + 5'-phospho-(deoxyribonucleotide)m = (deoxyribonucleotide)n+m + AMP + beta-nicotinamide D-nucleotide.. Its function is as follows. DNA ligase that catalyzes the formation of phosphodiester linkages between 5'-phosphoryl and 3'-hydroxyl groups in double-stranded DNA using NAD as a coenzyme and as the energy source for the reaction. It is essential for DNA replication and repair of damaged DNA. The sequence is that of DNA ligase from Syntrophomonas wolfei subsp. wolfei (strain DSM 2245B / Goettingen).